We begin with the raw amino-acid sequence, 196 residues long: ATP-dependent Clp protease proteolytic subunit (196 aa).

S98 functions as the Nucleophile in the catalytic mechanism. H123 is an active-site residue.

The protein belongs to the peptidase S14 family. In terms of assembly, fourteen ClpP subunits assemble into 2 heptameric rings which stack back to back to give a disk-like structure with a central cavity, resembling the structure of eukaryotic proteasomes.

The protein localises to the cytoplasm. The catalysed reaction is Hydrolysis of proteins to small peptides in the presence of ATP and magnesium. alpha-casein is the usual test substrate. In the absence of ATP, only oligopeptides shorter than five residues are hydrolyzed (such as succinyl-Leu-Tyr-|-NHMec, and Leu-Tyr-Leu-|-Tyr-Trp, in which cleavage of the -Tyr-|-Leu- and -Tyr-|-Trp bonds also occurs).. Its function is as follows. Cleaves peptides in various proteins in a process that requires ATP hydrolysis. Has a chymotrypsin-like activity. Plays a major role in the degradation of misfolded proteins. The protein is ATP-dependent Clp protease proteolytic subunit of Geobacillus thermodenitrificans (strain NG80-2).